We begin with the raw amino-acid sequence, 119 residues long: Chorion class CA protein ERA.5 (119 aa).

A signal peptide spans 1–21 (MSTYTFVLFCLQICLIQNVYS). Residues 22 to 55 (QCLGRVGPGGPPVGPYGGPLGGPGYGPVGYGGCG) are left arm. The central domain stretch occupies residues 56–103 (GYGGSGIGNVAVAGELPVAGSSAVMGQVPVIGAVEFAGPACAVGSVSI). The tract at residues 104–119 (SGACGPTCGCGGSPYY) is right arm.

Belongs to the chorion protein family.

This protein is one of many from the eggshell of the silk moth. The chain is Chorion class CA protein ERA.5 (ERA.5) from Bombyx mori (Silk moth).